A 688-amino-acid polypeptide reads, in one-letter code: Glycine--tRNA ligase beta subunit (688 aa).

Belongs to the class-II aminoacyl-tRNA synthetase family. As to quaternary structure, tetramer of two alpha and two beta subunits.

The protein localises to the cytoplasm. The catalysed reaction is tRNA(Gly) + glycine + ATP = glycyl-tRNA(Gly) + AMP + diphosphate. The sequence is that of Glycine--tRNA ligase beta subunit from Clostridioides difficile (strain 630) (Peptoclostridium difficile).